Consider the following 360-residue polypeptide: Membrane-bound lytic murein transglycosylase C (360 aa).

The first 16 residues, 1 to 16 (MKKYLALALIAPLLVS), serve as a signal peptide directing secretion. The N-palmitoyl cysteine moiety is linked to residue Cys17. Cys17 is lipidated: S-diacylglycerol cysteine.

It belongs to the transglycosylase Slt family.

It localises to the cell outer membrane. It catalyses the reaction Exolytic cleavage of the (1-&gt;4)-beta-glycosidic linkage between N-acetylmuramic acid (MurNAc) and N-acetylglucosamine (GlcNAc) residues in peptidoglycan, from either the reducing or the non-reducing ends of the peptidoglycan chains, with concomitant formation of a 1,6-anhydrobond in the MurNAc residue.. Functionally, murein-degrading enzyme. May play a role in recycling of muropeptides during cell elongation and/or cell division. The polypeptide is Membrane-bound lytic murein transglycosylase C (Klebsiella pneumoniae subsp. pneumoniae (strain ATCC 700721 / MGH 78578)).